The sequence spans 224 residues: Small ribosomal subunit protein uS3 (224 aa).

The KH type-2 domain maps to 20–89; that stretch reads LDEFLANYFK…NVNITVSPVP (70 aa).

It belongs to the universal ribosomal protein uS3 family. As to quaternary structure, part of the 30S ribosomal subunit.

Functionally, binds the lower part of the 30S subunit head. The sequence is that of Small ribosomal subunit protein uS3 from Staphylothermus marinus (strain ATCC 43588 / DSM 3639 / JCM 9404 / F1).